We begin with the raw amino-acid sequence, 63 residues long: Large ribosomal subunit protein uL29 (63 aa).

This sequence belongs to the universal ribosomal protein uL29 family.

The protein is Large ribosomal subunit protein uL29 of Caulobacter vibrioides (strain ATCC 19089 / CIP 103742 / CB 15) (Caulobacter crescentus).